The primary structure comprises 636 residues: 1,4-alpha-glucan branching enzyme GlgB (636 aa).

The Nucleophile role is filled by aspartate 309. The active-site Proton donor is glutamate 362.

Belongs to the glycosyl hydrolase 13 family. GlgB subfamily. Monomer.

The catalysed reaction is Transfers a segment of a (1-&gt;4)-alpha-D-glucan chain to a primary hydroxy group in a similar glucan chain.. It functions in the pathway glycan biosynthesis; glycogen biosynthesis. Catalyzes the formation of the alpha-1,6-glucosidic linkages in glycogen by scission of a 1,4-alpha-linked oligosaccharide from growing alpha-1,4-glucan chains and the subsequent attachment of the oligosaccharide to the alpha-1,6 position. This Aromatoleum aromaticum (strain DSM 19018 / LMG 30748 / EbN1) (Azoarcus sp. (strain EbN1)) protein is 1,4-alpha-glucan branching enzyme GlgB.